A 396-amino-acid chain; its full sequence is Protein BOP3 (396 aa).

Disordered regions lie at residues 1 to 22, 98 to 126, 145 to 168, 203 to 239, 254 to 274, and 355 to 396; these read MSTFNSYSQPKESNDNSHNNVN, GVPASSPMKAGGNQPHNNTEGTQSSENLP, PTPMSRQPSPYKFPASSSTGGISH, VARRIPSGTKSQESPLNKKPTSLHSRNLSLPIGKFTN, RDQQQPLSQPLPPPPQQQQDL, and REGR…LNST. 3 stretches are compositionally biased toward polar residues: residues 111-124, 159-168, and 210-230; these read QPHNNTEGTQSSEN, ASSSTGGISH, and GTKSQESPLNKKPTSLHSRNL. Basic and acidic residues predominate over residues 355 to 369; that stretch reads REGRQVHDDLDDRTC. Over residues 370–396 the composition is skewed to polar residues; that stretch reads SESSSRNESPVRTITKDNSVGKILNST.

The protein resides in the cytoplasm. The protein localises to the nucleus. In terms of biological role, involved in resistance to methylmercury. Overexpression suppresses a PAM1-SLV3 double null mutation. The protein is Protein BOP3 (BOP3) of Saccharomyces cerevisiae (strain ATCC 204508 / S288c) (Baker's yeast).